The chain runs to 388 residues: Succinate--CoA ligase [ADP-forming] subunit beta (388 aa).

An ATP-grasp domain is found at 9 to 244 (KEILRKYNVP…LDEEDANEIE (236 aa)). Residues K46, 53–55 (GRG), E99, A102, and E107 contribute to the ATP site. The Mg(2+) site is built by N199 and D213. Substrate-binding positions include N264 and 321 to 323 (GIM).

The protein belongs to the succinate/malate CoA ligase beta subunit family. In terms of assembly, heterotetramer of two alpha and two beta subunits. Mg(2+) serves as cofactor.

It carries out the reaction succinate + ATP + CoA = succinyl-CoA + ADP + phosphate. The enzyme catalyses GTP + succinate + CoA = succinyl-CoA + GDP + phosphate. It participates in carbohydrate metabolism; tricarboxylic acid cycle; succinate from succinyl-CoA (ligase route): step 1/1. Functionally, succinyl-CoA synthetase functions in the citric acid cycle (TCA), coupling the hydrolysis of succinyl-CoA to the synthesis of either ATP or GTP and thus represents the only step of substrate-level phosphorylation in the TCA. The beta subunit provides nucleotide specificity of the enzyme and binds the substrate succinate, while the binding sites for coenzyme A and phosphate are found in the alpha subunit. This chain is Succinate--CoA ligase [ADP-forming] subunit beta, found in Cupriavidus necator (strain ATCC 17699 / DSM 428 / KCTC 22496 / NCIMB 10442 / H16 / Stanier 337) (Ralstonia eutropha).